The sequence spans 209 residues: PRA1 family protein E (209 aa).

The segment at 1–20 (MNQKPPPYGYGGAGGGGVGP) is disordered. Positions 9-19 (GYGGAGGGGVG) are enriched in gly residues. The next 3 membrane-spanning stretches (helical) occupy residues 90–110 (IVFLGLIYHPMSMIAFIVVFI), 132–152 (VDDKIVLVLLSLVTVLALVYT), and 155–175 (GENVLVSLIIGLLIVGAHGAF).

Belongs to the PRA1 family. Interacts with PRA1B1, PRA1B2, PRA1B3, PRA1B4, PRA1B5 and PRA1B6. As to expression, expressed in hypocotyls, roots, lateral roots, columella cells, leaves and shoot apex.

The protein localises to the endosome membrane. In terms of biological role, may be involved in both secretory and endocytic intracellular trafficking in the endosomal/prevacuolar compartments. In Arabidopsis thaliana (Mouse-ear cress), this protein is PRA1 family protein E (PRA1E).